Reading from the N-terminus, the 503-residue chain is Aspartyl/glutamyl-tRNA(Asn/Gln) amidotransferase subunit B (503 aa).

Belongs to the GatB/GatE family. GatB subfamily. As to quaternary structure, heterotrimer of A, B and C subunits.

It carries out the reaction L-glutamyl-tRNA(Gln) + L-glutamine + ATP + H2O = L-glutaminyl-tRNA(Gln) + L-glutamate + ADP + phosphate + H(+). It catalyses the reaction L-aspartyl-tRNA(Asn) + L-glutamine + ATP + H2O = L-asparaginyl-tRNA(Asn) + L-glutamate + ADP + phosphate + 2 H(+). Allows the formation of correctly charged Asn-tRNA(Asn) or Gln-tRNA(Gln) through the transamidation of misacylated Asp-tRNA(Asn) or Glu-tRNA(Gln) in organisms which lack either or both of asparaginyl-tRNA or glutaminyl-tRNA synthetases. The reaction takes place in the presence of glutamine and ATP through an activated phospho-Asp-tRNA(Asn) or phospho-Glu-tRNA(Gln). The protein is Aspartyl/glutamyl-tRNA(Asn/Gln) amidotransferase subunit B of Cereibacter sphaeroides (strain KD131 / KCTC 12085) (Rhodobacter sphaeroides).